The chain runs to 238 residues: Dephospho-CoA kinase (238 aa).

A DPCK domain is found at Ile3 to Ala233. Gly11–Thr16 is an ATP binding site. Disordered stretches follow at residues His110–Ser129 and Leu219–Gly238.

This sequence belongs to the CoaE family.

The protein localises to the cytoplasm. The enzyme catalyses 3'-dephospho-CoA + ATP = ADP + CoA + H(+). It participates in cofactor biosynthesis; coenzyme A biosynthesis; CoA from (R)-pantothenate: step 5/5. In terms of biological role, catalyzes the phosphorylation of the 3'-hydroxyl group of dephosphocoenzyme A to form coenzyme A. The polypeptide is Dephospho-CoA kinase (Synechococcus sp. (strain JA-2-3B'a(2-13)) (Cyanobacteria bacterium Yellowstone B-Prime)).